A 213-amino-acid chain; its full sequence is 3,4-dihydroxy-2-butanone 4-phosphate synthase (213 aa).

D-ribulose 5-phosphate contacts are provided by residues Arg27–Glu28, Asp32, Arg140–Thr144, and Glu164. Glu28 provides a ligand contact to Mg(2+). His143 lines the Mg(2+) pocket.

Belongs to the DHBP synthase family. As to quaternary structure, homodimer. The cofactor is Mg(2+). Mn(2+) serves as cofactor.

It catalyses the reaction D-ribulose 5-phosphate = (2S)-2-hydroxy-3-oxobutyl phosphate + formate + H(+). The protein operates within cofactor biosynthesis; riboflavin biosynthesis; 2-hydroxy-3-oxobutyl phosphate from D-ribulose 5-phosphate: step 1/1. Functionally, catalyzes the conversion of D-ribulose 5-phosphate to formate and 3,4-dihydroxy-2-butanone 4-phosphate. This Agrobacterium fabrum (strain C58 / ATCC 33970) (Agrobacterium tumefaciens (strain C58)) protein is 3,4-dihydroxy-2-butanone 4-phosphate synthase.